Reading from the N-terminus, the 307-residue chain is Nucleotide-binding protein ACP_0619 (307 aa).

Residues 1–14 (MPAPEPTRRAKKDA) are compositionally biased toward basic and acidic residues. The interval 1–23 (MPAPEPTRRAKKDASASPSPAHP) is disordered. 33 to 40 (GLSGAGKG) is an ATP binding site. 83–86 (DVRE) serves as a coordination point for GTP.

This sequence belongs to the RapZ-like family.

Functionally, displays ATPase and GTPase activities. The polypeptide is Nucleotide-binding protein ACP_0619 (Acidobacterium capsulatum (strain ATCC 51196 / DSM 11244 / BCRC 80197 / JCM 7670 / NBRC 15755 / NCIMB 13165 / 161)).